The sequence spans 389 residues: MKMKLPPFIELYRALIATPSISAADSALDQSNEALINLLAGWFADLGFRVEIQPVPDTRHKFNLLASIGENENGEGHGGLLLAGHTDTVPYDEGRWTRDPFTLTEHDHKLYGLGTADMKGFFAFILDAVRDIDASKLTKPLYILATADEETTMAGARYFAANTQLRPDFAIIGEPTSLQPVRAHKGHISNAIRITGQSGHSSDPARGVNAIDLMHESITQLMALRTTLQERYHNPAFTIPYPTMNFGHINGGDAANRICACCELHMDIRPLPGLTLSDLNELMTEALEPVSQRWPGRLSIDELHPPIPGYECPTDHHMVGVIEKLLGERTAVVNYCTEAPFIQQVCPTLVLGPGSINQAHQPDEFIDMAFIEPTRELIGQLVDHFCQQK.

Histidine 85 lines the Zn(2+) pocket. Residue aspartate 87 is part of the active site. Aspartate 117 provides a ligand contact to Zn(2+). Glutamate 149 is an active-site residue. Glutamate 150, glutamate 174, and histidine 360 together coordinate Zn(2+).

This sequence belongs to the peptidase M20A family. ArgE subfamily. In terms of assembly, homodimer. Requires Zn(2+) as cofactor. The cofactor is Co(2+). Glutathione is required as a cofactor.

It localises to the cytoplasm. It catalyses the reaction N(2)-acetyl-L-ornithine + H2O = L-ornithine + acetate. It functions in the pathway amino-acid biosynthesis; L-arginine biosynthesis; L-ornithine from N(2)-acetyl-L-ornithine (linear): step 1/1. In terms of biological role, catalyzes the hydrolysis of the amide bond of N(2)-acetylated L-amino acids. Cleaves the acetyl group from N-acetyl-L-ornithine to form L-ornithine, an intermediate in L-arginine biosynthesis pathway, and a branchpoint in the synthesis of polyamines. The polypeptide is Acetylornithine deacetylase (Yersinia pseudotuberculosis serotype O:1b (strain IP 31758)).